The sequence spans 815 residues: Probable inorganic carbon transporter subunit DabA (815 aa).

Cysteine 334, aspartate 336, histidine 507, and cysteine 522 together coordinate Zn(2+).

This sequence belongs to the inorganic carbon transporter (TC 9.A.2) DabA family. Forms a complex with DabB. Zn(2+) serves as cofactor.

The protein localises to the cell inner membrane. Part of an energy-coupled inorganic carbon pump. The sequence is that of Probable inorganic carbon transporter subunit DabA from Ectopseudomonas mendocina (strain ymp) (Pseudomonas mendocina).